Consider the following 228-residue polypeptide: Elongation factor 1-beta (228 aa).

Residues 74–116 are disordered; the sequence is ASKAFTAYGPEGSEASANPKDKPAEEEEEEDLFASDSEDEDPA. The interval 84–93 is igE-binding; the sequence is EGSEASANPK. The span at 97-115 shows a compositional bias: acidic residues; sequence AEEEEEEDLFASDSEDEDP.

This sequence belongs to the EF-1-beta/EF-1-delta family. As to quaternary structure, EF-1 is composed of 4 subunits: alpha, beta, delta, and gamma.

In terms of biological role, EF-1-beta and EF-1-delta stimulate the exchange of GDP bound to EF-1-alpha to GTP. This is Elongation factor 1-beta from Penicillium citrinum.